A 452-amino-acid polypeptide reads, in one-letter code: Cobyrinate a,c-diamide synthase (452 aa).

Residues 248–441 (RVAYALDAAF…LHIHFYQNPA (194 aa)) form the GATase cobBQ-type domain. The Nucleophile role is filled by Cys330.

The protein belongs to the CobB/CbiA family. Mg(2+) serves as cofactor.

The enzyme catalyses cob(II)yrinate + 2 L-glutamine + 2 ATP + 2 H2O = cob(II)yrinate a,c diamide + 2 L-glutamate + 2 ADP + 2 phosphate + 2 H(+). Its pathway is cofactor biosynthesis; adenosylcobalamin biosynthesis; cob(II)yrinate a,c-diamide from sirohydrochlorin (anaerobic route): step 10/10. Functionally, catalyzes the ATP-dependent amidation of the two carboxylate groups at positions a and c of cobyrinate, using either L-glutamine or ammonia as the nitrogen source. This is Cobyrinate a,c-diamide synthase from Listeria innocua serovar 6a (strain ATCC BAA-680 / CLIP 11262).